The sequence spans 401 residues: Argininosuccinate synthase (401 aa).

ATP contacts are provided by residues 10–18 and Ala38; that span reads AYSGGVDTS. Tyr89 serves as a coordination point for L-citrulline. ATP is bound at residue Gly119. Thr121, Asn125, and Asp126 together coordinate L-aspartate. Residue Asn125 coordinates L-citrulline. Residues Arg129, Ser177, Ser186, Glu262, and Tyr274 each contribute to the L-citrulline site.

The protein belongs to the argininosuccinate synthase family. Type 1 subfamily. Homotetramer.

It localises to the cytoplasm. The catalysed reaction is L-citrulline + L-aspartate + ATP = 2-(N(omega)-L-arginino)succinate + AMP + diphosphate + H(+). The protein operates within amino-acid biosynthesis; L-arginine biosynthesis; L-arginine from L-ornithine and carbamoyl phosphate: step 2/3. In Microcystis aeruginosa (strain NIES-843 / IAM M-2473), this protein is Argininosuccinate synthase.